The chain runs to 376 residues: Alanine racemase (376 aa).

Lys40 acts as the Proton acceptor; specific for D-alanine in catalysis. Lys40 is modified (N6-(pyridoxal phosphate)lysine). Arg138 serves as a coordination point for substrate. Residue Tyr270 is the Proton acceptor; specific for L-alanine of the active site. Met317 provides a ligand contact to substrate.

The protein belongs to the alanine racemase family. Pyridoxal 5'-phosphate is required as a cofactor.

The enzyme catalyses L-alanine = D-alanine. It participates in amino-acid biosynthesis; D-alanine biosynthesis; D-alanine from L-alanine: step 1/1. In terms of biological role, catalyzes the interconversion of L-alanine and D-alanine. May also act on other amino acids. This Lactobacillus delbrueckii subsp. bulgaricus (strain ATCC 11842 / DSM 20081 / BCRC 10696 / JCM 1002 / NBRC 13953 / NCIMB 11778 / NCTC 12712 / WDCM 00102 / Lb 14) protein is Alanine racemase (alr).